A 213-amino-acid chain; its full sequence is Flagellin A1 (213 aa).

A propeptide spanning residues 1–10 (MFENINEDRG) is cleaved from the precursor. Residues N70, N115, and N172 are each glycosylated (N-linked (GlcNAc...) asparagine).

The protein belongs to the archaeal flagellin family. Post-translationally, glycosylated by a pentasaccharide similar to the S-layer glycoprotein, probably comprising a hexose, 2 hexuronic acids, a methyl ester of a hexuronic acid and mannose. Glycosylation is required for biosynthesis of stable flagella.

The protein localises to the archaeal flagellum. In terms of biological role, major flagellin required for motility. Not involved in PibD-dependent surface adhesion. Much more abundant in cells compared to FlgA2. The sequence is that of Flagellin A1 (flgA1) from Haloferax volcanii (strain ATCC 29605 / DSM 3757 / JCM 8879 / NBRC 14742 / NCIMB 2012 / VKM B-1768 / DS2) (Halobacterium volcanii).